Reading from the N-terminus, the 553-residue chain is Flagellar hook-associated protein 1 (553 aa).

Belongs to the flagella basal body rod proteins family.

The protein localises to the secreted. The protein resides in the bacterial flagellum. The protein is Flagellar hook-associated protein 1 (flgK) of Salmonella typhi.